The following is a 146-amino-acid chain: Hemoglobin subunit beta (146 aa).

An N-acetylvaline modification is found at Val-1. The Globin domain occupies 2–146; that stretch reads HLTGEEKAAV…VANALAHKYH (145 aa). Thr-12 carries the post-translational modification Phosphothreonine. Ser-44 is subject to Phosphoserine. Lys-59 carries the post-translational modification N6-acetyllysine. His-63 serves as a coordination point for heme b. At Lys-82 the chain carries N6-acetyllysine. Residue His-92 participates in heme b binding. At Cys-93 the chain carries S-nitrosocysteine. Lys-144 is subject to N6-acetyllysine.

The protein belongs to the globin family. In terms of assembly, heterotetramer of two alpha chains and two beta chains. As to expression, red blood cells.

Involved in oxygen transport from the lung to the various peripheral tissues. The sequence is that of Hemoglobin subunit beta (HBB) from Mustela putorius furo (European domestic ferret).